A 416-amino-acid polypeptide reads, in one-letter code: Pre-mRNA-splicing factor slu-7 (416 aa).

The interval 1-34 (MPPPPPNRREQATAAPSSTDKSETGAGAARKEDN) is disordered. The CCHC-type zinc finger occupies 95 to 112 (GACENCGAMGHKKKDCLE). 2 stretches are compositionally biased toward basic and acidic residues: residues 168-179 (RRALQGDQKTPD) and 188-213 (DDKSGFKYDEESDMGRDRATTKQSMR). The tract at residues 168-213 (RRALQGDQKTPDGEGADGPEDDKSGFKYDEESDMGRDRATTKQSMR) is disordered.

It belongs to the SLU7 family. Associated with the spliceosome.

The protein resides in the nucleus. Involved in pre-mRNA splicing. The polypeptide is Pre-mRNA-splicing factor slu-7 (slu-7) (Neurospora crassa (strain ATCC 24698 / 74-OR23-1A / CBS 708.71 / DSM 1257 / FGSC 987)).